Here is a 132-residue protein sequence, read N- to C-terminus: MAKPKKKVTRIRRRERKNIERGHAHIQSTFNNTIITLTDVHGNAISWASSGQLGFKGSRKSTPFASQMAAETAAKAAMEHGLKSVEVFVKGPGSGREAAIRALQATGLEVTMIKDVTPIPHNGCRPPKRRRV.

It belongs to the universal ribosomal protein uS11 family. Part of the 30S ribosomal subunit. Interacts with proteins S7 and S18. Binds to IF-3.

Its function is as follows. Located on the platform of the 30S subunit, it bridges several disparate RNA helices of the 16S rRNA. Forms part of the Shine-Dalgarno cleft in the 70S ribosome. In Clostridioides difficile (strain 630) (Peptoclostridium difficile), this protein is Small ribosomal subunit protein uS11.